Consider the following 50-residue polypeptide: uncharacterized protein (50 aa).

Residues 10 to 29 (LFFYYPFFIIFLYIYLVFFI) traverse the membrane as a helical segment.

It is found in the plastid. The protein localises to the chloroplast membrane. This is an uncharacterized protein from Marchantia polymorpha (Common liverwort).